A 66-amino-acid chain; its full sequence is DNA-binding protein 7d (66 aa).

N6-methyllysine; partial is present on residues Lys5 and Lys7.

The protein belongs to the 7 kDa DNA-binding/endoribonuclease P2 family. In terms of assembly, monomer. Post-translationally, lys-5 was 70% monomethylated in form 7a, 25% in form 7b, and 20% in form 7d. Lys-7 was 50% monomethylated in form 7a, 40% in form 7b, and 50% in form 7d.

The protein localises to the cytoplasm. Functionally, can constrain negative DNA supercoils. May be involved in maintaining the integrity of the genome at high temperature. The protein is DNA-binding protein 7d of Sulfolobus acidocaldarius (strain ATCC 33909 / DSM 639 / JCM 8929 / NBRC 15157 / NCIMB 11770).